The following is a 551-amino-acid chain: Solute carrier family 22 member 6 (551 aa).

Topologically, residues 1 to 23 (MAFNDLLKQVGGVGRFQRIQVTL) are cytoplasmic. A helical membrane pass occupies residues 24-44 (VVLPLLLMASHNTLQNFTAAI). Topologically, residues 45–135 (PPHHCRPPAH…LVCSHRALRQ (91 aa)) are extracellular. Asparagine 56, asparagine 92, and asparagine 113 each carry an N-linked (GlcNAc...) asparagine glycan. Residues 136 to 156 (LGQSLYMAGVLIGAMVFGYLA) traverse the membrane as a helical segment. The Cytoplasmic portion of the chain corresponds to 157–164 (DRLGRRKV). The helical transmembrane segment at 165–187 (LILNYLQTAVSGTCAAFSPNFTV) threads the bilayer. Residues 188 to 195 (YCTFRLLS) lie on the Extracellular side of the membrane. A helical membrane pass occupies residues 196-216 (GMSLAGIALNCMTLNVEWMPI). At 217-224 (HTRAYVGT) the chain is on the cytoplasmic side. The helical transmembrane segment at 225–245 (LAGYVYSTGQFLLAGVAYAVP) threads the bilayer. Residues 246–248 (HWR) lie on the Extracellular side of the membrane. Residues 249–269 (YLQLLVSVPFFAFFVYSWFFI) form a helical membrane-spanning segment. Residues 270 to 337 (ESARWYSTPG…ELLRCPALRH (68 aa)) are Cytoplasmic-facing. A helical membrane pass occupies residues 338–358 (LFLCLSLLWFATSFAYYGLVM). Topologically, residues 359–368 (DLQGFGVSIY) are extracellular. A helical membrane pass occupies residues 369–389 (LIQVIFGAVDLPAKLVCFLVI). The Cytoplasmic portion of the chain corresponds to 390 to 395 (NSLGRR). The helical transmembrane segment at 396 to 416 (PAQMASLLLAGICILVNGVIP) threads the bilayer. The Extracellular portion of the chain corresponds to 417-425 (RDQSIVRTS). The chain crosses the membrane as a helical span at residues 426 to 446 (LAVLGKGCLASSFNCIFLYTG). The Cytoplasmic portion of the chain corresponds to 447–484 (ELYPTMIRQTGLGMGSTMARVGSIVSPLVSMTSELYPS). The chain crosses the membrane as a helical span at residues 485 to 505 (LPLFIYGAVPVAASAATALLP). Residues 506 to 551 (ETLGQPLPDTVQDLESRRRGKPRRQQQEQQKQMVPLQASVQEKNGL) lie on the Extracellular side of the membrane. The segment at 520–551 (ESRRRGKPRRQQQEQQKQMVPLQASVQEKNGL) is disordered.

Belongs to the major facilitator (TC 2.A.1) superfamily. Organic cation transporter (TC 2.A.1.19) family. Glycosylated. Glycosylation is necessary for proper targeting of the transporter to the plasma membrane.

The protein resides in the basolateral cell membrane. The protein localises to the basal cell membrane. The catalysed reaction is (6R)-L-erythro-5,6,7,8-tetrahydrobiopterin(out) + a dicarboxylate(in) = (6R)-L-erythro-5,6,7,8-tetrahydrobiopterin(in) + a dicarboxylate(out). The enzyme catalyses L-erythro-7,8-dihydrobiopterin(out) + a dicarboxylate(in) = L-erythro-7,8-dihydrobiopterin(in) + a dicarboxylate(out). It carries out the reaction L-sepiapterin(out) + a dicarboxylate(in) = L-sepiapterin(in) + a dicarboxylate(out). It catalyses the reaction prostaglandin F2alpha(out) + a dicarboxylate(in) = prostaglandin F2alpha(in) + a dicarboxylate(out). The catalysed reaction is prostaglandin E2(out) + a dicarboxylate(in) = prostaglandin E2(in) + a dicarboxylate(out). The enzyme catalyses 3',5'-cyclic AMP(out) + a dicarboxylate(in) = 3',5'-cyclic AMP(in) + a dicarboxylate(out). It carries out the reaction 3',5'-cyclic GMP(out) + a dicarboxylate(in) = 3',5'-cyclic GMP(in) + a dicarboxylate(out). It catalyses the reaction urate(out) + a dicarboxylate(in) = urate(in) + a dicarboxylate(out). The catalysed reaction is kynurenate(out) + glutarate(in) = kynurenate(in) + glutarate(out). The enzyme catalyses (indol-3-yl)acetate(out) + a dicarboxylate(in) = (indol-3-yl)acetate(in) + a dicarboxylate(out). It carries out the reaction indoxyl sulfate(out) + a dicarboxylate(in) = indoxyl sulfate(in) + a dicarboxylate(out). It catalyses the reaction N-benzoylglycine(out) + a dicarboxylate(in) = N-benzoylglycine(in) + a dicarboxylate(out). The catalysed reaction is 3-carboxy-4-methyl-5-propyl-2-furanpropanoate(out) + a dicarboxylate(in) = 3-carboxy-4-methyl-5-propyl-2-furanpropanoate(in) + a dicarboxylate(out). In terms of biological role, secondary active transporter that functions as a Na(+)-independent organic anion (OA)/dicarboxylate antiporter where the uptake of one molecule of OA into the cell is coupled with an efflux of one molecule of intracellular dicarboxylate such as 2-oxoglutarate or glutarate. Mediates the uptake of OA across the basolateral side of proximal tubule epithelial cells, thereby contributing to the renal elimination of endogenous OA from the systemic circulation into the urine. Functions as a biopterin transporters involved in the uptake and the secretion of coenzymes tetrahydrobiopterin (BH4), dihydrobiopterin (BH2) and sepiapterin to urine, thereby determining baseline levels of blood biopterins. Transports prostaglandin E2 (PGE2) and prostaglandin F2-alpha (PGF2-alpha) and may contribute to their renal excretion. Also mediates the uptake of cyclic nucleotides such as cAMP and cGMP. Involved in the transport of neuroactive tryptophan metabolites kynurenate (KYNA) and xanthurenate (XA) and may contribute to their secretion from the brain. May transport glutamate. Also involved in the disposition of uremic toxins and potentially toxic xenobiotics by the renal organic anion secretory pathway, helping reduce their undesired toxicological effects on the body. Uremic toxins include the indoxyl sulfate (IS), hippurate/N-benzoylglycine (HA), indole acetate (IA), 3-carboxy-4- methyl-5-propyl-2-furanpropionate (CMPF) and urate. Xenobiotics include the mycotoxin ochratoxin (OTA). May also contribute to the transport of organic compounds in testes across the blood-testis-barrier. May also work as a bidirectional OA/dicarboxylate exchanger. The chain is Solute carrier family 22 member 6 from Oryctolagus cuniculus (Rabbit).